The chain runs to 258 residues: Regulatory protein RecX (258 aa).

This sequence belongs to the RecX family.

It localises to the cytoplasm. In terms of biological role, modulates RecA activity. This chain is Regulatory protein RecX, found in Streptococcus sanguinis (strain SK36).